The sequence spans 474 residues: Cysteine--tRNA ligase (474 aa).

A Zn(2+)-binding site is contributed by Cys27. A 'HIGH' region motif is present at residues 29–39 (PTVYNYIHIGN). Residues Cys212, His237, and Glu241 each contribute to the Zn(2+) site. Residues 271 to 275 (KMSKS) carry the 'KMSKS' region motif. Residue Lys274 coordinates ATP.

The protein belongs to the class-I aminoacyl-tRNA synthetase family. Monomer. It depends on Zn(2+) as a cofactor.

It is found in the cytoplasm. The catalysed reaction is tRNA(Cys) + L-cysteine + ATP = L-cysteinyl-tRNA(Cys) + AMP + diphosphate. In Lactobacillus delbrueckii subsp. bulgaricus (strain ATCC 11842 / DSM 20081 / BCRC 10696 / JCM 1002 / NBRC 13953 / NCIMB 11778 / NCTC 12712 / WDCM 00102 / Lb 14), this protein is Cysteine--tRNA ligase.